Reading from the N-terminus, the 189-residue chain is S-protein homolog 26 (189 aa).

Residues Met-1–Ala-25 form the signal peptide.

It belongs to the plant self-incompatibility (S1) protein family.

It localises to the secreted. The polypeptide is S-protein homolog 26 (Arabidopsis thaliana (Mouse-ear cress)).